Here is a 375-residue protein sequence, read N- to C-terminus: Phospho-N-acetylmuramoyl-pentapeptide-transferase (375 aa).

A run of 10 helical transmembrane segments spans residues 2-22, 55-75, 82-102, 120-140, 158-178, 198-218, 237-257, 264-284, 289-309, and 345-365; these read IGLL…TPLF, AVII…LAVL, PTAS…VGFV, GKII…LNFP, IPWL…FVIW, GLAT…SLFQ, PMDL…FLWW, IFMG…FAIF, ILVA…IIQV, and WLLS…DWLI.

This sequence belongs to the glycosyltransferase 4 family. MraY subfamily. Mg(2+) serves as cofactor.

It localises to the cell membrane. It catalyses the reaction UDP-N-acetyl-alpha-D-muramoyl-L-alanyl-gamma-D-glutamyl-meso-2,6-diaminopimeloyl-D-alanyl-D-alanine + di-trans,octa-cis-undecaprenyl phosphate = di-trans,octa-cis-undecaprenyl diphospho-N-acetyl-alpha-D-muramoyl-L-alanyl-D-glutamyl-meso-2,6-diaminopimeloyl-D-alanyl-D-alanine + UMP. Its pathway is cell wall biogenesis; peptidoglycan biosynthesis. In terms of biological role, catalyzes the initial step of the lipid cycle reactions in the biosynthesis of the cell wall peptidoglycan: transfers peptidoglycan precursor phospho-MurNAc-pentapeptide from UDP-MurNAc-pentapeptide onto the lipid carrier undecaprenyl phosphate, yielding undecaprenyl-pyrophosphoryl-MurNAc-pentapeptide, known as lipid I. The protein is Phospho-N-acetylmuramoyl-pentapeptide-transferase of Micrococcus luteus (strain ATCC 4698 / DSM 20030 / JCM 1464 / CCM 169 / CCUG 5858 / IAM 1056 / NBRC 3333 / NCIMB 9278 / NCTC 2665 / VKM Ac-2230) (Micrococcus lysodeikticus).